Here is a 295-residue protein sequence, read N- to C-terminus: Ethanolamine ammonia-lyase small subunit (295 aa).

Val207, Glu228, and Cys258 together coordinate adenosylcob(III)alamin.

The protein belongs to the EutC family. The basic unit is a heterodimer which dimerizes to form tetramers. The heterotetramers trimerize; 6 large subunits form a core ring with 6 small subunits projecting outwards. Adenosylcob(III)alamin is required as a cofactor.

The protein localises to the bacterial microcompartment. The catalysed reaction is ethanolamine = acetaldehyde + NH4(+). It functions in the pathway amine and polyamine degradation; ethanolamine degradation. Catalyzes the deamination of various vicinal amino-alcohols to oxo compounds. Allows this organism to utilize ethanolamine as the sole source of nitrogen and carbon in the presence of external vitamin B12. This Escherichia coli (strain SE11) protein is Ethanolamine ammonia-lyase small subunit.